The following is a 227-amino-acid chain: ATP-dependent dethiobiotin synthetase BioD (227 aa).

13–18 (DIGKTY) serves as a coordination point for ATP. T17 is a Mg(2+) binding site. K38 is an active-site residue. Position 42 (S42) interacts with substrate. Residues D55, 116–119 (EGSG), and 179–180 (NN) each bind ATP. Residues D55 and E116 each contribute to the Mg(2+) site.

Belongs to the dethiobiotin synthetase family. As to quaternary structure, homodimer. It depends on Mg(2+) as a cofactor.

The protein resides in the cytoplasm. It carries out the reaction (7R,8S)-7,8-diammoniononanoate + CO2 + ATP = (4R,5S)-dethiobiotin + ADP + phosphate + 3 H(+). The protein operates within cofactor biosynthesis; biotin biosynthesis; biotin from 7,8-diaminononanoate: step 1/2. Functionally, catalyzes a mechanistically unusual reaction, the ATP-dependent insertion of CO2 between the N7 and N8 nitrogen atoms of 7,8-diaminopelargonic acid (DAPA, also called 7,8-diammoniononanoate) to form a ureido ring. The protein is ATP-dependent dethiobiotin synthetase BioD of Clostridium botulinum (strain ATCC 19397 / Type A).